The following is an 86-amino-acid chain: Large ribosomal subunit protein bL31 (86 aa).

The segment at 66–86 (GMGSANSATSKEQKADKDSQK) is disordered. Basic and acidic residues predominate over residues 76-86 (KEQKADKDSQK).

The protein belongs to the bacterial ribosomal protein bL31 family. Type A subfamily. Part of the 50S ribosomal subunit.

In terms of biological role, binds the 23S rRNA. The protein is Large ribosomal subunit protein bL31 of Prochlorococcus marinus (strain MIT 9215).